A 1182-amino-acid chain; its full sequence is Receptor-type guanylate cyclase gcy-19 (1182 aa).

An N-terminal signal peptide occupies residues 1–24; that stretch reads MEYLLFLLLFAGFLTFLPRFLIYA. Residues 25–507 lie on the Extracellular side of the membrane; sequence QITSSTTTTT…PQSFVDQYGA (483 aa). N-linked (GlcNAc...) asparagine glycosylation is found at asparagine 91, asparagine 369, asparagine 430, and asparagine 453. A helical membrane pass occupies residues 508 to 528; that stretch reads LVFAIGGVLIFAMLFVITCFF. Topologically, residues 529–1182 are cytoplasmic; it reads YVMRQKRLER…FRRQETLALI (654 aa). In terms of domain architecture, Protein kinase spans 562–849; that stretch reads RMSKRSLQSG…KGNLMDHVFN (288 aa). A Guanylate cyclase domain is found at 907–1037; it reads TVFFSDVVKF…DTVNTASRME (131 aa). The segment at 1094-1164 is disordered; sequence VSSNSGYQSD…EAKARDIHNE (71 aa). Low complexity predominate over residues 1142–1152; it reads SPTLSKRSVSP.

It belongs to the adenylyl cyclase class-4/guanylyl cyclase family. In terms of tissue distribution, expressed in IL2 sensory neurons.

It localises to the cell membrane. It catalyses the reaction GTP = 3',5'-cyclic GMP + diphosphate. Functionally, guanylate cyclase involved in the production of the second messenger cGMP. The polypeptide is Receptor-type guanylate cyclase gcy-19 (Caenorhabditis elegans).